The primary structure comprises 691 residues: 1-butanol dehydrogenase (cytochrome c) (691 aa).

Positions 1 to 38 (MLTTTFARKREESVPLRKGIQRALLGLSCLVLSTTSFA) are cleaved as a signal peptide. Residue Glu84 participates in pyrroloquinoline quinone binding. Cys130 and Cys131 are joined by a disulfide. Pyrroloquinoline quinone is bound by residues Arg136, Thr181, and 197 to 198 (GA). Ca(2+) is bound by residues Glu199 and Asp322. Asp322 (proton acceptor) is an active-site residue. Pyrroloquinoline quinone contacts are provided by residues Lys349, 408–409 (NW), and Val558. Positions 605–684 (DDVAEGTGLY…KIKAFILGTA (80 aa)) constitute a Cytochrome c domain. Residues Cys618, Cys621, His622, and Met661 each coordinate heme c.

Belongs to the bacterial PQQ dehydrogenase family. As to quaternary structure, monomer. Requires pyrroloquinoline quinone as cofactor. The cofactor is Ca(2+). Heme c is required as a cofactor.

The protein resides in the periplasm. It carries out the reaction butan-1-ol + 2 Fe(III)-[cytochrome c] = butanal + 2 Fe(II)-[cytochrome c] + 2 H(+). With respect to regulation, dehydrogenase activity is increased by ammonium ions. Functionally, involved in the metabolism of butane. Could be important in the detoxification of 1-butanol. Catalyzes the oxidation of 1-butanol to butyraldehyde. Also able to use 1-propanol, 2-pentanol, propionaldehyde and butyraldehyde as substrates. The polypeptide is 1-butanol dehydrogenase (cytochrome c) (Thauera butanivorans (strain ATCC 43655 / DSM 2080 / JCM 20651 / CCUG 51053 / NBRC 103042 / IAM 12574 / Bu B1211) (Pseudomonas butanovora)).